The following is a 73-amino-acid chain: Large ribosomal subunit protein uL24 (73 aa).

Residues 51-65 (DDNPKGGFIHKEKPM) are compositionally biased toward basic and acidic residues. The segment at 51–73 (DDNPKGGFIHKEKPMHISNVKKA) is disordered.

The protein belongs to the universal ribosomal protein uL24 family. As to quaternary structure, part of the 50S ribosomal subunit.

Functionally, one of two assembly initiator proteins, it binds directly to the 5'-end of the 23S rRNA, where it nucleates assembly of the 50S subunit. In terms of biological role, one of the proteins that surrounds the polypeptide exit tunnel on the outside of the subunit. The protein is Large ribosomal subunit protein uL24 of Helicobacter acinonychis (strain Sheeba).